Reading from the N-terminus, the 296-residue chain is Acetylglutamate kinase (296 aa).

Substrate-binding positions include 69-70 (GG), Arg-91, and Asn-193.

It belongs to the acetylglutamate kinase family. ArgB subfamily.

Its subcellular location is the cytoplasm. It carries out the reaction N-acetyl-L-glutamate + ATP = N-acetyl-L-glutamyl 5-phosphate + ADP. The protein operates within amino-acid biosynthesis; L-arginine biosynthesis; N(2)-acetyl-L-ornithine from L-glutamate: step 2/4. In terms of biological role, catalyzes the ATP-dependent phosphorylation of N-acetyl-L-glutamate. This is Acetylglutamate kinase from Paracidovorax citrulli (strain AAC00-1) (Acidovorax citrulli).